The following is a 342-amino-acid chain: S-adenosylmethionine:tRNA ribosyltransferase-isomerase (342 aa).

Belongs to the QueA family. In terms of assembly, monomer.

The protein resides in the cytoplasm. The catalysed reaction is 7-aminomethyl-7-carbaguanosine(34) in tRNA + S-adenosyl-L-methionine = epoxyqueuosine(34) in tRNA + adenine + L-methionine + 2 H(+). It participates in tRNA modification; tRNA-queuosine biosynthesis. Transfers and isomerizes the ribose moiety from AdoMet to the 7-aminomethyl group of 7-deazaguanine (preQ1-tRNA) to give epoxyqueuosine (oQ-tRNA). The chain is S-adenosylmethionine:tRNA ribosyltransferase-isomerase from Streptococcus pneumoniae (strain ATCC BAA-255 / R6).